A 188-amino-acid polypeptide reads, in one-letter code: ATP synthase subunit delta (188 aa).

The protein belongs to the ATPase delta chain family. In terms of assembly, F-type ATPases have 2 components, F(1) - the catalytic core - and F(0) - the membrane proton channel. F(1) has five subunits: alpha(3), beta(3), gamma(1), delta(1), epsilon(1). F(0) has three main subunits: a(1), b(2) and c(10-14). The alpha and beta chains form an alternating ring which encloses part of the gamma chain. F(1) is attached to F(0) by a central stalk formed by the gamma and epsilon chains, while a peripheral stalk is formed by the delta and b chains.

It localises to the cell inner membrane. In terms of biological role, f(1)F(0) ATP synthase produces ATP from ADP in the presence of a proton or sodium gradient. F-type ATPases consist of two structural domains, F(1) containing the extramembraneous catalytic core and F(0) containing the membrane proton channel, linked together by a central stalk and a peripheral stalk. During catalysis, ATP synthesis in the catalytic domain of F(1) is coupled via a rotary mechanism of the central stalk subunits to proton translocation. Functionally, this protein is part of the stalk that links CF(0) to CF(1). It either transmits conformational changes from CF(0) to CF(1) or is implicated in proton conduction. This Sinorhizobium fredii (strain NBRC 101917 / NGR234) protein is ATP synthase subunit delta.